Reading from the N-terminus, the 638-residue chain is Threonine--tRNA ligase 2 (638 aa).

In terms of domain architecture, TGS spans methionine 1 to threonine 64. The interval aspartate 245–proline 535 is catalytic. Zn(2+) contacts are provided by cysteine 336, histidine 387, and histidine 512.

The protein belongs to the class-II aminoacyl-tRNA synthetase family. In terms of assembly, homodimer. Zn(2+) is required as a cofactor.

The protein resides in the cytoplasm. It catalyses the reaction tRNA(Thr) + L-threonine + ATP = L-threonyl-tRNA(Thr) + AMP + diphosphate + H(+). Catalyzes the attachment of threonine to tRNA(Thr) in a two-step reaction: L-threonine is first activated by ATP to form Thr-AMP and then transferred to the acceptor end of tRNA(Thr). Also edits incorrectly charged L-seryl-tRNA(Thr). This is Threonine--tRNA ligase 2 (thrZ) from Bacillus subtilis (strain 168).